A 293-amino-acid polypeptide reads, in one-letter code: MPELPEVETVRRGLEQKLNNFIIKKVEVCRDSTVAFPNKKEDFIGGLNNSLLYKWNRRGKYLIAELKKLGNENGRFPLEKFSKNNGFLIVHLRMTGYFKFINNSAQPCKHTRIRVFDNKNNELRYIDVRSFGQMWWIKEGLSPNKIIKGLGSLGPEPFSKDFDEIYLKKVISKRTKSIKAILLDQTIVAGIGNIYADESLYSAGISPFREARTIKKNELIKLKESIVTVLKNSIGSGGTTFSDFRDLEGENGNFGLQTNVYRRTGKECRKCGNLIERKKISGRSTHWCPKCQK.

The active-site Schiff-base intermediate with DNA is Pro-2. The active-site Proton donor is Glu-3. The Proton donor; for beta-elimination activity role is filled by Lys-60. DNA is bound by residues His-110, Arg-129, and Arg-174. The FPG-type zinc-finger motif lies at 259-293 (NVYRRTGKECRKCGNLIERKKISGRSTHWCPKCQK). Arg-283 acts as the Proton donor; for delta-elimination activity in catalysis.

The protein belongs to the FPG family. In terms of assembly, monomer. It depends on Zn(2+) as a cofactor.

The catalysed reaction is Hydrolysis of DNA containing ring-opened 7-methylguanine residues, releasing 2,6-diamino-4-hydroxy-5-(N-methyl)formamidopyrimidine.. The enzyme catalyses 2'-deoxyribonucleotide-(2'-deoxyribose 5'-phosphate)-2'-deoxyribonucleotide-DNA = a 3'-end 2'-deoxyribonucleotide-(2,3-dehydro-2,3-deoxyribose 5'-phosphate)-DNA + a 5'-end 5'-phospho-2'-deoxyribonucleoside-DNA + H(+). Involved in base excision repair of DNA damaged by oxidation or by mutagenic agents. Acts as a DNA glycosylase that recognizes and removes damaged bases. Has a preference for oxidized purines, such as 7,8-dihydro-8-oxoguanine (8-oxoG). Has AP (apurinic/apyrimidinic) lyase activity and introduces nicks in the DNA strand. Cleaves the DNA backbone by beta-delta elimination to generate a single-strand break at the site of the removed base with both 3'- and 5'-phosphates. The sequence is that of Formamidopyrimidine-DNA glycosylase from Prochlorococcus marinus (strain MIT 9215).